The primary structure comprises 434 residues: Nicotinate phosphoribosyltransferase (434 aa).

Residue His242 is modified to Phosphohistidine; by autocatalysis.

Belongs to the NAPRTase family. Transiently phosphorylated on a His residue during the reaction cycle. Phosphorylation strongly increases the affinity for substrates and increases the rate of nicotinate D-ribonucleotide production. Dephosphorylation regenerates the low-affinity form of the enzyme, leading to product release.

It catalyses the reaction nicotinate + 5-phospho-alpha-D-ribose 1-diphosphate + ATP + H2O = nicotinate beta-D-ribonucleotide + ADP + phosphate + diphosphate. It participates in cofactor biosynthesis; NAD(+) biosynthesis; nicotinate D-ribonucleotide from nicotinate: step 1/1. Functionally, catalyzes the synthesis of beta-nicotinate D-ribonucleotide from nicotinate and 5-phospho-D-ribose 1-phosphate at the expense of ATP. This is Nicotinate phosphoribosyltransferase from Agrobacterium fabrum (strain C58 / ATCC 33970) (Agrobacterium tumefaciens (strain C58)).